Reading from the N-terminus, the 25-residue chain is Growth-blocking peptide (25 aa).

An intrachain disulfide couples Cys7 to Cys19. A Glutamine amide modification is found at Gln25.

The protein belongs to the GBP/PSP1/paralytic peptide family. In terms of tissue distribution, hemolymph.

Its function is as follows. Biogenic peptide that prevents, in lepidopteran, the onset of metamorphosis from larva to pupa. This growth-blocking peptide has repressive activity against juvenile hormone esterase. The sequence is that of Growth-blocking peptide from Cotesia kariyai (Parasitic wasp).